Here is a 249-residue protein sequence, read N- to C-terminus: Capsid protein (249 aa).

Residues 1-33 (MDTDGDNDVFGSGNDTRNNDDKKKEEMKQNISD) form a disordered region. Positions 17 to 28 (RNNDDKKKEEMK) are enriched in basic and acidic residues.

Belongs to the closteroviridae capsid protein family.

The protein localises to the virion. Its function is as follows. Capsid protein self-assembles to form filamentous capsids, about 650-850 nm in length. This chain is Capsid protein, found in Beta vulgaris (Sugar beet).